Reading from the N-terminus, the 360-residue chain is Tryptophan--tRNA ligase, mitochondrial (360 aa).

The transit peptide at 1–18 (MALFSVRKARECWRFIRA) directs the protein to the mitochondrion. ATP is bound by residues Q42 and 48–51 (HLGN). D167 is an L-tryptophan binding site. Residues 179–181 (GED), V217, and 226–230 (KMSKS) contribute to the ATP site.

The protein belongs to the class-I aminoacyl-tRNA synthetase family.

It is found in the mitochondrion matrix. Its subcellular location is the mitochondrion. The catalysed reaction is tRNA(Trp) + L-tryptophan + ATP = L-tryptophyl-tRNA(Trp) + AMP + diphosphate + H(+). Catalyzes the attachment of tryptophan to tRNA(Trp) in a two-step reaction: tryptophan is first activated by ATP to form Trp-AMP and then transferred to the acceptor end of tRNA(Trp). This is Tryptophan--tRNA ligase, mitochondrial (Wars2) from Mus musculus (Mouse).